We begin with the raw amino-acid sequence, 120 residues long: Ribonuclease P protein component (120 aa).

It belongs to the RnpA family. In terms of assembly, consists of a catalytic RNA component (M1 or rnpB) and a protein subunit.

It carries out the reaction Endonucleolytic cleavage of RNA, removing 5'-extranucleotides from tRNA precursor.. Its function is as follows. RNaseP catalyzes the removal of the 5'-leader sequence from pre-tRNA to produce the mature 5'-terminus. It can also cleave other RNA substrates such as 4.5S RNA. The protein component plays an auxiliary but essential role in vivo by binding to the 5'-leader sequence and broadening the substrate specificity of the ribozyme. In Chlamydia trachomatis serovar L2 (strain ATCC VR-902B / DSM 19102 / 434/Bu), this protein is Ribonuclease P protein component.